The chain runs to 101 residues: Osteocalcin (101 aa).

The first 19 residues, 1–19 (MKLAILTVLLLGAAVLCLG), serve as a signal peptide directing secretion. The propeptide occupies 20 to 52 (SKDADHSNSVGESHSSEAFISRQESASFARLKR). The 47-residue stretch at 53-99 (SYGNNVGQGAAVGSPLESQREVCELNPDCDELADHIGFQEAYRRFYG) folds into the Gla domain. Ca(2+) contacts are provided by E69, E73, E76, and D82. 3 positions are modified to 4-carboxyglutamate: E69, E73, and E76. C75 and C81 form a disulfide bridge.

It belongs to the osteocalcin/matrix Gla protein family. In terms of processing, gamma-carboxyglutamate residues are formed by vitamin K dependent carboxylation by GGCX. These residues are essential for the binding of calcium.

It localises to the secreted. Its function is as follows. The carboxylated form is one of the main organic components of the bone matrix, which constitutes 1-2% of the total bone protein. The carboxylated form binds strongly to apatite and calcium. The sequence is that of Osteocalcin (bglap) from Xenopus laevis (African clawed frog).